The following is a 464-amino-acid chain: ATP synthase subunit beta 2 (464 aa).

153-160 (GGAGVGKT) provides a ligand contact to ATP.

This sequence belongs to the ATPase alpha/beta chains family. F-type ATPases have 2 components, CF(1) - the catalytic core - and CF(0) - the membrane proton channel. CF(1) has five subunits: alpha(3), beta(3), gamma(1), delta(1), epsilon(1). CF(0) has three main subunits: a(1), b(2) and c(9-12). The alpha and beta chains form an alternating ring which encloses part of the gamma chain. CF(1) is attached to CF(0) by a central stalk formed by the gamma and epsilon chains, while a peripheral stalk is formed by the delta and b chains.

It localises to the cell inner membrane. It carries out the reaction ATP + H2O + 4 H(+)(in) = ADP + phosphate + 5 H(+)(out). Its function is as follows. Produces ATP from ADP in the presence of a proton gradient across the membrane. The catalytic sites are hosted primarily by the beta subunits. This is ATP synthase subunit beta 2 from Paraburkholderia xenovorans (strain LB400).